The chain runs to 471 residues: WASH complex subunit 1 (471 aa).

The tract at residues 1 to 54 (MTPTGTQHSLAGQTYAVPLIQPDLRREEAIQQVADALQYLQKVSGDIFSRISQR) is required for WASH complex assembly. The tract at residues 1–167 (MTPTGTQHSL…EGLGGLPSNI (167 aa)) is WHD1. The interval 297 to 471 (EDGVLTARPP…GEEDEDDWES (175 aa)) is disordered. Residues 304 to 336 (RPPPPPPPPPPPAPAVLMSVPPPPPPPQAPPGQ) show a composition bias toward pro residues. The interval 353-471 (QGAPKEVVDP…GEEDEDDWES (119 aa)) is VCA. A WH2 domain is found at 365-387 (GRATLLESIRQAGGIGKAKLRSV). Over residues 386-402 (SVKERKLEKKKQKEQEQ) the composition is skewed to basic and acidic residues. Positions 428–442 (SGKGPGSGASEGPGG) are enriched in gly residues. Residues 462–471 (GEEDEDDWES) show a composition bias toward acidic residues.

It belongs to the WASH1 family. In terms of assembly, component of the WASH core complex also described as WASH regulatory complex SHRC composed of WASHC1, WASHC2, WASHC3, WASHC4 and WASHC5. The WASH core complex associates with the F-actin-capping protein dimer (formed by CAPZA1, CAPZA2 or CAPZA3 and CAPZB); the assembly has been initially described as WASH complex. Interacts (via WHD1 region) with WASHC2; the interaction is direct. Interacts with alpha-tubulin. Interacts with BECN1; WASHC1 and AMBRA1 can competitively interact with BECN1. Interacts with BLOC1S2; may associate with the BLOC-1 complex. Interacts with tubulin gamma chain (TUBG1 or TUBG2). Interacts with TBC1D23.

The protein localises to the early endosome membrane. Its subcellular location is the recycling endosome membrane. It is found in the late endosome. It localises to the cytoplasmic vesicle. The protein resides in the autophagosome. The protein localises to the cytoplasm. Its subcellular location is the cytoskeleton. It is found in the microtubule organizing center. It localises to the centrosome. The protein resides in the centriole. In terms of biological role, acts as a component of the WASH core complex that functions as a nucleation-promoting factor (NPF) at the surface of endosomes, where it recruits and activates the Arp2/3 complex to induce actin polymerization, playing a key role in the fission of tubules that serve as transport intermediates during endosome sorting. Involved in endocytic trafficking of EGF. Involved in transferrin receptor recycling. Regulates the trafficking of endosomal alpha5beta1 integrin to the plasma membrane and involved in invasive cell migration. In T-cells involved in endosome-to-membrane recycling of receptors including T-cell receptor (TCR), CD28 and ITGAL; proposed to be implicated in T-cell proliferation and effector function. In dendritic cells involved in endosome-to-membrane recycling of major histocompatibility complex (MHC) class II probably involving retromer and subsequently allowing antigen sampling, loading and presentation during T-cell activation. Involved in negative regulation of autophagy independently from its role in endosomal sorting by inhibiting BECN1 ubiquitination to inactivate PIK3C3/Vps34 activity. This is WASH complex subunit 1 from Bos taurus (Bovine).